The chain runs to 586 residues: Pyruvate kinase (586 aa).

Residue R32 participates in substrate binding. Residues N34, S36, D66, and T67 each contribute to the K(+) site. Residue 34-37 participates in ATP binding; it reads NFSH. ATP contacts are provided by R73 and K156. Residue E222 coordinates Mg(2+). Residues G245, D246, and T278 each contribute to the substrate site. D246 provides a ligand contact to Mg(2+).

This sequence belongs to the pyruvate kinase family. It in the C-terminal section; belongs to the PEP-utilizing enzyme family. Homotetramer. Mg(2+) serves as cofactor. K(+) is required as a cofactor.

The enzyme catalyses pyruvate + ATP = phosphoenolpyruvate + ADP + H(+). Its pathway is carbohydrate degradation; glycolysis; pyruvate from D-glyceraldehyde 3-phosphate: step 5/5. This is Pyruvate kinase (pyk) from Sporosarcina psychrophila (Bacillus psychrophilus).